A 387-amino-acid chain; its full sequence is Eukaryotic translation initiation factor 3 subunit M (387 aa).

Residues 181–340 form the PCI domain; that stretch reads LSSKVMIELL…RKVHISSTMH (160 aa).

The protein belongs to the eIF-3 subunit M family. As to quaternary structure, component of the eukaryotic translation initiation factor 3 (eIF-3) complex. The eIF-3 complex interacts with pix.

Its subcellular location is the cytoplasm. The protein resides in the golgi apparatus. Component of the eukaryotic translation initiation factor 3 (eIF-3) complex, which is involved in protein synthesis of a specialized repertoire of mRNAs and, together with other initiation factors, stimulates binding of mRNA and methionyl-tRNAi to the 40S ribosome. The eIF-3 complex specifically targets and initiates translation of a subset of mRNAs involved in cell proliferation. The polypeptide is Eukaryotic translation initiation factor 3 subunit M (Drosophila ananassae (Fruit fly)).